Consider the following 147-residue polypeptide: Hemoglobin subunit epsilon (147 aa).

The region spanning 3–147 (HFTAEEKAAI…VAIALGHKYH (145 aa)) is the Globin domain. Serine 14 and serine 51 each carry phosphoserine. Residues histidine 64 and histidine 93 each coordinate heme b.

This sequence belongs to the globin family. Heterotetramer of two alpha chains and two epsilon chains in early embryonic hemoglobin Gower-2; two zeta chains and two epsilon chains in early embryonic hemoglobin Gower-1. In terms of tissue distribution, red blood cells.

Its function is as follows. The epsilon chain is a beta-type chain of early mammalian embryonic hemoglobin. In Callithrix jacchus (White-tufted-ear marmoset), this protein is Hemoglobin subunit epsilon (HBE1).